A 258-amino-acid chain; its full sequence is Small ribosomal subunit protein uS2 (258 aa).

The interval 226 to 258 is disordered; it reads AQNKDVEPVADKDEKPEAAPVDEAETATETTGE. The span at 229–242 shows a compositional bias: basic and acidic residues; that stretch reads KDVEPVADKDEKPE. The span at 245 to 258 shows a compositional bias: acidic residues; that stretch reads PVDEAETATETTGE.

This sequence belongs to the universal ribosomal protein uS2 family.

This Solidesulfovibrio magneticus (strain ATCC 700980 / DSM 13731 / RS-1) (Desulfovibrio magneticus) protein is Small ribosomal subunit protein uS2.